A 213-amino-acid polypeptide reads, in one-letter code: Glutathione S-transferase PARB (213 aa).

One can recognise a GST N-terminal domain in the interval 1-82 (MAIKVHGSPM…YIAHVYADNG (82 aa)). Glutathione contacts are provided by residues serine 11, 12 to 13 (TA), 40 to 41 (HK), 53 to 54 (QV), and 66 to 67 (ES). The 125-residue stretch at 89–213 (DPKKMPSMSV…WVKGLEKLQK (125 aa)) folds into the GST C-terminal domain.

Belongs to the GST superfamily. Phi family.

It catalyses the reaction RX + glutathione = an S-substituted glutathione + a halide anion + H(+). Functionally, conjugation of reduced glutathione to a wide number of exogenous and endogenous hydrophobic electrophiles. The sequence is that of Glutathione S-transferase PARB from Nicotiana tabacum (Common tobacco).